The chain runs to 369 residues: Aspartate beta-hydroxylase domain-containing protein 2 (369 aa).

Topologically, residues 1–58 (MVWAPLGPPRTDCLTLLHTPSKDSPKMSLEWLVAWSWSLDGLRDCIATGIQSVRDCDT) are cytoplasmic. A helical transmembrane segment spans residues 59–79 (TAVITVACLLVLFVWYCYHVG). At 80-369 (REQPRPYVSV…ALDFIFAPGR (290 aa)) the chain is on the lumenal side. N-linked (GlcNAc...) asparagine glycosylation is present at Asn-211. Positions 228 and 272 each coordinate 2-oxoglutarate. His-283 serves as a coordination point for Fe cation. 292-294 (RCH) contributes to the 2-oxoglutarate binding site. A Fe cation-binding site is contributed by His-328. Arg-341 lines the 2-oxoglutarate pocket.

This sequence belongs to the aspartyl/asparaginyl beta-hydroxylase family. Fe cation serves as cofactor.

The protein resides in the membrane. May function as 2-oxoglutarate-dependent dioxygenase. This is Aspartate beta-hydroxylase domain-containing protein 2 (ASPHD2) from Homo sapiens (Human).